We begin with the raw amino-acid sequence, 222 residues long: Prolactin-3B1 (222 aa).

The first 31 residues, 1–31 (MKLSLSQPCSFSGALLLLAVSNLLVWEKVTS), serve as a signal peptide directing secretion. Disulfide bonds link C82/C197 and C214/C222.

Belongs to the somatotropin/prolactin family.

Its subcellular location is the secreted. In Mus musculus (Mouse), this protein is Prolactin-3B1 (Prl3b1).